The following is a 415-amino-acid chain: Protein fuzzy homolog (415 aa).

This sequence belongs to the fuzzy family. As to quaternary structure, component of the CPLANE (ciliogenesis and planar polarity effectors) complex, composed of INTU, FUZ and WDPCP. Interacts with CPLANE1 and CPLANE2.

It is found in the cytoplasm. The protein localises to the cytoskeleton. It localises to the cilium basal body. Its function is as follows. Probable planar cell polarity effector involved in cilium biogenesis. Proposed to function as core component of the CPLANE (ciliogenesis and planar polarity effectors) complex involved in the recruitment of peripheral IFT-A proteins to basal bodies. May regulate protein and membrane transport to the cilium. May regulate the morphogenesis of hair follicles which depends on functional primary cilia. Binds phosphatidylinositol 3-phosphate with highest affinity, followed by phosphatidylinositol 4-phosphate and phosphatidylinositol 5-phosphate. The protein is Protein fuzzy homolog (Fuz) of Rattus norvegicus (Rat).